Reading from the N-terminus, the 88-residue chain is Small ribosomal subunit protein bS16 (88 aa).

It belongs to the bacterial ribosomal protein bS16 family.

In Sorangium cellulosum (strain So ce56) (Polyangium cellulosum (strain So ce56)), this protein is Small ribosomal subunit protein bS16.